Consider the following 136-residue polypeptide: Biopolymer transport protein exbD2 (136 aa).

Over Met1–Val23 the chain is Cytoplasmic. A helical transmembrane segment spans residues Met24–Val44. At Asp45–Gln136 the chain is on the periplasmic side.

This sequence belongs to the ExbD/TolR family. The accessory proteins ExbB and ExbD seem to form a complex with TonB.

The protein resides in the cell inner membrane. Its function is as follows. Involved in the TonB-dependent energy-dependent transport of various receptor-bound substrates. The chain is Biopolymer transport protein exbD2 (exbD2) from Xanthomonas campestris pv. campestris (strain ATCC 33913 / DSM 3586 / NCPPB 528 / LMG 568 / P 25).